We begin with the raw amino-acid sequence, 251 residues long: Vitamin B12 import ATP-binding protein BtuD (251 aa).

Positions I2–S236 constitute an ABC transporter domain. G30–S37 contributes to the ATP binding site.

The protein belongs to the ABC transporter superfamily. Vitamin B12 importer (TC 3.A.1.13.1) family. The complex is composed of two ATP-binding proteins (BtuD), two transmembrane proteins (BtuC) and a solute-binding protein (BtuF).

It localises to the cell inner membrane. It catalyses the reaction an R-cob(III)alamin(out) + ATP + H2O = an R-cob(III)alamin(in) + ADP + phosphate + H(+). In terms of biological role, part of the ABC transporter complex BtuCDF involved in vitamin B12 import. Responsible for energy coupling to the transport system. The chain is Vitamin B12 import ATP-binding protein BtuD from Vibrio cholerae serotype O1 (strain ATCC 39315 / El Tor Inaba N16961).